The following is a 360-amino-acid chain: Chorismate synthase (360 aa).

NADP(+) is bound at residue Arg-47. FMN-binding positions include 124–126 (RSS), 240–241 (NA), Gly-285, 300–304 (KPVAT), and Arg-326.

Belongs to the chorismate synthase family. In terms of assembly, homotetramer. Requires FMNH2 as cofactor.

The catalysed reaction is 5-O-(1-carboxyvinyl)-3-phosphoshikimate = chorismate + phosphate. Its pathway is metabolic intermediate biosynthesis; chorismate biosynthesis; chorismate from D-erythrose 4-phosphate and phosphoenolpyruvate: step 7/7. Its function is as follows. Catalyzes the anti-1,4-elimination of the C-3 phosphate and the C-6 proR hydrogen from 5-enolpyruvylshikimate-3-phosphate (EPSP) to yield chorismate, which is the branch point compound that serves as the starting substrate for the three terminal pathways of aromatic amino acid biosynthesis. This reaction introduces a second double bond into the aromatic ring system. This is Chorismate synthase from Cytophaga hutchinsonii (strain ATCC 33406 / DSM 1761 / CIP 103989 / NBRC 15051 / NCIMB 9469 / D465).